The chain runs to 955 residues: 2-oxoglutarate dehydrogenase E1 component (955 aa).

Belongs to the alpha-ketoglutarate dehydrogenase family. In terms of assembly, homodimer. Part of the 2-oxoglutarate dehydrogenase (OGDH) complex composed of E1 (2-oxoglutarate dehydrogenase), E2 (dihydrolipoamide succinyltransferase) and E3 (dihydrolipoamide dehydrogenase); the complex contains multiple copies of the three enzymatic components (E1, E2 and E3). Requires thiamine diphosphate as cofactor.

It catalyses the reaction N(6)-[(R)-lipoyl]-L-lysyl-[protein] + 2-oxoglutarate + H(+) = N(6)-[(R)-S(8)-succinyldihydrolipoyl]-L-lysyl-[protein] + CO2. E1 component of the 2-oxoglutarate dehydrogenase (OGDH) complex which catalyzes the decarboxylation of 2-oxoglutarate, the first step in the conversion of 2-oxoglutarate to succinyl-CoA and CO(2). This Bacillus cereus (strain B4264) protein is 2-oxoglutarate dehydrogenase E1 component.